Consider the following 396-residue polypeptide: F-box protein pof13 (396 aa).

Residues 40–89 form the F-box domain; it reads KNSNLFLLNRDIWSLIINYLDAFDILRLMHSSRQFYYWLRKSAVDECCFN.

Part of a SCF (SKP1-cullin-F-box) protein ligase complex. Interacts with skp1.

The protein localises to the cytoplasm. The protein operates within protein modification; protein ubiquitination. The chain is F-box protein pof13 (pof13) from Schizosaccharomyces pombe (strain 972 / ATCC 24843) (Fission yeast).